The following is a 130-amino-acid chain: Large ribosomal subunit protein bL19 (130 aa).

Belongs to the bacterial ribosomal protein bL19 family.

Functionally, this protein is located at the 30S-50S ribosomal subunit interface and may play a role in the structure and function of the aminoacyl-tRNA binding site. The polypeptide is Large ribosomal subunit protein bL19 (Mycoplasma capricolum subsp. capricolum (strain California kid / ATCC 27343 / NCTC 10154)).